A 1104-amino-acid chain; its full sequence is Transposon Ty4-P Gag-Pol polyprotein (1104 aa).

Residues V48–N112 adopt a coiled-coil conformation. Residues Q381–Y501 form a ty4 protease region. Residue D414 is the For protease activity; shared with dimeric partner of the active site. The integrase-type zinc finger-like stretch occupies residues A539 to C599. Positions T619 to P786 constitute an Integrase catalytic domain. D630 and D695 together coordinate Mg(2+).

As to quaternary structure, the protease is a homodimer, whose active site consists of two apposed aspartic acid residues. In terms of processing, proteolytically processed into capsid protein (CA), Ty4 protease (PR), integrase (IN) and reverse transcriptase/ribonuclease H (RT) proteins. Initially, virus-like particles (VLPs) are composed of the structural unprocessed proteins Gag and Gag-Pol, and also contain the host initiator methionine tRNA (tRNA(i)-Met) which serves as a primer for minus-strand DNA synthesis, and a dimer of genomic Ty RNA. Processing of the polyproteins occurs within the particle and proceeds by an ordered pathway, called maturation. First, the protease (PR) is released by autocatalytic cleavage of the Gag-Pol polyprotein, and this cleavage is a prerequisite for subsequent processing at the remaining sites to release the mature structural and catalytic proteins. Maturation takes place prior to the RT reaction and is required to produce transposition-competent VLPs.

It is found in the cytoplasm. The protein localises to the nucleus. The enzyme catalyses DNA(n) + a 2'-deoxyribonucleoside 5'-triphosphate = DNA(n+1) + diphosphate. The catalysed reaction is Endonucleolytic cleavage to 5'-phosphomonoester.. In terms of biological role, capsid protein (CA) is the structural component of the virus-like particle (VLP), forming the shell that encapsulates the retrotransposons dimeric RNA genome. Its function is as follows. The aspartyl protease (PR) mediates the proteolytic cleavages of the Gag and Gag-Pol polyproteins after assembly of the VLP. Functionally, reverse transcriptase/ribonuclease H (RT) is a multifunctional enzyme that catalyzes the conversion of the retro-elements RNA genome into dsDNA within the VLP. The enzyme displays a DNA polymerase activity that can copy either DNA or RNA templates, and a ribonuclease H (RNase H) activity that cleaves the RNA strand of RNA-DNA heteroduplexes during plus-strand synthesis and hydrolyzes RNA primers. The conversion leads to a linear dsDNA copy of the retrotransposon that includes long terminal repeats (LTRs) at both ends. Integrase (IN) targets the VLP to the nucleus, where a subparticle preintegration complex (PIC) containing at least integrase and the newly synthesized dsDNA copy of the retrotransposon must transit the nuclear membrane. Once in the nucleus, integrase performs the integration of the dsDNA into the host genome. In Saccharomyces cerevisiae (strain ATCC 204508 / S288c) (Baker's yeast), this protein is Transposon Ty4-P Gag-Pol polyprotein (TY4B-P).